Here is a 639-residue protein sequence, read N- to C-terminus: Mediator of RNA polymerase II transcription subunit 17 (639 aa).

Residues 160-187 adopt a coiled-coil conformation; the sequence is RLQSFNAAADKLLKSASRLENEVASETR.

The protein belongs to the Mediator complex subunit 17 family. Component of the Mediator complex.

The protein localises to the nucleus. Component of the Mediator complex, a coactivator involved in the regulated transcription of nearly all RNA polymerase II-dependent genes. Mediator functions as a bridge to convey information from gene-specific regulatory proteins to the basal RNA polymerase II transcription machinery. Mediator is recruited to promoters by direct interactions with regulatory proteins and serves as a scaffold for the assembly of a functional preinitiation complex with RNA polymerase II and the general transcription factors. This is Mediator of RNA polymerase II transcription subunit 17 (srb4) from Aspergillus fumigatus (strain ATCC MYA-4609 / CBS 101355 / FGSC A1100 / Af293) (Neosartorya fumigata).